A 547-amino-acid chain; its full sequence is Chaperonin GroEL (547 aa).

Residues 30 to 33, K51, 87 to 91, G415, 479 to 481, and D495 contribute to the ATP site; these read TLGP, DGTTT, and NAA.

Belongs to the chaperonin (HSP60) family. As to quaternary structure, forms a cylinder of 14 subunits composed of two heptameric rings stacked back-to-back. Interacts with the co-chaperonin GroES.

The protein localises to the cytoplasm. It carries out the reaction ATP + H2O + a folded polypeptide = ADP + phosphate + an unfolded polypeptide.. Its function is as follows. Together with its co-chaperonin GroES, plays an essential role in assisting protein folding. The GroEL-GroES system forms a nano-cage that allows encapsulation of the non-native substrate proteins and provides a physical environment optimized to promote and accelerate protein folding. This Delftia acidovorans (strain DSM 14801 / SPH-1) protein is Chaperonin GroEL.